A 247-amino-acid polypeptide reads, in one-letter code: PsbP domain-containing protein 3, chloroplastic (247 aa).

The N-terminal 26 residues, 1-26 (MAAISPWLSSPQSFSNPRVTITDSRR), are a transit peptide targeting the chloroplast. The transit peptide at 27 to 80 (CSSISAAISVLDSSNEEQHRISSRDHVGMKRRDVMLQIASSVFFLPLAISPAFA) directs the protein to the thylakoid.

This sequence belongs to the PsbP family.

It is found in the plastid. The protein resides in the chloroplast thylakoid lumen. This chain is PsbP domain-containing protein 3, chloroplastic (PPD3), found in Arabidopsis thaliana (Mouse-ear cress).